The sequence spans 565 residues: Sulfite reductase [NADPH] hemoprotein beta-component (565 aa).

[4Fe-4S] cluster-binding residues include C429, C435, C474, and C478. C478 provides a ligand contact to siroheme.

This sequence belongs to the nitrite and sulfite reductase 4Fe-4S domain family. In terms of assembly, alpha(8)-beta(8). The alpha component is a flavoprotein, the beta component is a hemoprotein. It depends on siroheme as a cofactor. [4Fe-4S] cluster is required as a cofactor.

The catalysed reaction is hydrogen sulfide + 3 NADP(+) + 3 H2O = sulfite + 3 NADPH + 4 H(+). Its pathway is sulfur metabolism; hydrogen sulfide biosynthesis; hydrogen sulfide from sulfite (NADPH route): step 1/1. Its function is as follows. Component of the sulfite reductase complex that catalyzes the 6-electron reduction of sulfite to sulfide. This is one of several activities required for the biosynthesis of L-cysteine from sulfate. The polypeptide is Sulfite reductase [NADPH] hemoprotein beta-component (Shewanella baltica (strain OS155 / ATCC BAA-1091)).